Here is a 124-residue protein sequence, read N- to C-terminus: Small ribosomal subunit protein bS6 (124 aa).

The interval 97-124 (TGPSPMMKEVQREEAKKAAAAQPTEAQA) is disordered. The segment covering 114-124 (AAAAQPTEAQA) has biased composition (low complexity).

It belongs to the bacterial ribosomal protein bS6 family.

Its function is as follows. Binds together with bS18 to 16S ribosomal RNA. The sequence is that of Small ribosomal subunit protein bS6 from Paraburkholderia phymatum (strain DSM 17167 / CIP 108236 / LMG 21445 / STM815) (Burkholderia phymatum).